The following is a 394-amino-acid chain: NAD(P)H-quinone oxidoreductase subunit H (394 aa).

The protein belongs to the complex I 49 kDa subunit family. As to quaternary structure, NDH-1 can be composed of about 15 different subunits; different subcomplexes with different compositions have been identified which probably have different functions.

It is found in the cellular thylakoid membrane. The catalysed reaction is a plastoquinone + NADH + (n+1) H(+)(in) = a plastoquinol + NAD(+) + n H(+)(out). It carries out the reaction a plastoquinone + NADPH + (n+1) H(+)(in) = a plastoquinol + NADP(+) + n H(+)(out). In terms of biological role, NDH-1 shuttles electrons from an unknown electron donor, via FMN and iron-sulfur (Fe-S) centers, to quinones in the respiratory and/or the photosynthetic chain. The immediate electron acceptor for the enzyme in this species is believed to be plastoquinone. Couples the redox reaction to proton translocation, and thus conserves the redox energy in a proton gradient. Cyanobacterial NDH-1 also plays a role in inorganic carbon-concentration. The protein is NAD(P)H-quinone oxidoreductase subunit H of Prochlorococcus marinus (strain NATL2A).